Reading from the N-terminus, the 243-residue chain is Terpene cyclase dpmpB (243 aa).

7 consecutive transmembrane segments (helical) span residues 13–33, 51–71, 78–98, 112–132, 141–161, 169–189, and 207–227; these read FLEV…GWTA, ALMP…ILPF, WVHV…IKFA, LTWI…ALAA, AWSA…QLLC, SYLL…QDIL, and LWFV…LWYV.

It belongs to the paxB family.

The protein localises to the membrane. It functions in the pathway secondary metabolite biosynthesis; terpenoid biosynthesis. In terms of biological role, terpene cyclase; part of the gene cluster that mediates the biosynthesis of diterpenoid pyrones. The first step of the pathway is the synthesis of the alpha-pyrone moiety by the polyketide synthase dpmpA via condensation of one acetyl-CoA starter unit with 3 malonyl-CoA units and 2 methylations. The alpha-pyrone is then combined with geranylgeranyl pyrophosphate (GGPP) formed by the GGPP synthase dpmpD through the action of the prenyltransferase dpmpC to yield a linear alpha-pyrone diterpenoid. Subsequent steps in the diterpenoid pyrone biosynthetic pathway involve the decalin core formation, which is initiated by the epoxidation of the C10-C11 olefin by the FAD-dependent oxidoreductase dpmpE, and is followed by a cyclization cascade catalyzed by the terpene cyclase dpmpB. The short chain dehydrogenase/reductase dpmpG then oxidizes the 8S hydroxy group to a ketone and the short chain dehydrogenase/reductase dpmpH reduces the ketone to the 8R hydroxy group to yield higginsianin B. Higginsianin B is further methylated by the methyltransferase dpmpI to produce the intermediate named FDDP B. The cytochrome P450 monooxygenase dpmpJ then oxidizes the C-26 methyl to primary alcohol, producing the final diterpenoid pyrone with a C-26 primary alcohol on the gamma-pyrone moiety named FDDP C. The polypeptide is Terpene cyclase dpmpB (Macrophomina phaseolina (strain MS6) (Charcoal rot fungus)).